A 158-amino-acid chain; its full sequence is Acetolactate synthase small subunit (158 aa).

Positions 4-78 (ILSVLLENES…DVLRVIKVGQ (75 aa)) constitute an ACT domain.

The protein belongs to the acetolactate synthase small subunit family. As to quaternary structure, dimer of large and small chains.

The catalysed reaction is 2 pyruvate + H(+) = (2S)-2-acetolactate + CO2. It participates in amino-acid biosynthesis; L-isoleucine biosynthesis; L-isoleucine from 2-oxobutanoate: step 1/4. Its pathway is amino-acid biosynthesis; L-valine biosynthesis; L-valine from pyruvate: step 1/4. In Buchnera aphidicola subsp. Schizaphis graminum (strain Sg), this protein is Acetolactate synthase small subunit (ilvH).